A 416-amino-acid polypeptide reads, in one-letter code: Serine hydroxymethyltransferase (416 aa).

(6S)-5,6,7,8-tetrahydrofolate is bound by residues leucine 121 and 125 to 127; that span reads GHL. N6-(pyridoxal phosphate)lysine is present on lysine 230.

The protein belongs to the SHMT family. As to quaternary structure, homodimer. Requires pyridoxal 5'-phosphate as cofactor.

It localises to the cytoplasm. It catalyses the reaction (6R)-5,10-methylene-5,6,7,8-tetrahydrofolate + glycine + H2O = (6S)-5,6,7,8-tetrahydrofolate + L-serine. It participates in one-carbon metabolism; tetrahydrofolate interconversion. It functions in the pathway amino-acid biosynthesis; glycine biosynthesis; glycine from L-serine: step 1/1. In terms of biological role, catalyzes the reversible interconversion of serine and glycine with tetrahydrofolate (THF) serving as the one-carbon carrier. This reaction serves as the major source of one-carbon groups required for the biosynthesis of purines, thymidylate, methionine, and other important biomolecules. Also exhibits THF-independent aldolase activity toward beta-hydroxyamino acids, producing glycine and aldehydes, via a retro-aldol mechanism. The protein is Serine hydroxymethyltransferase of Nitrosospira multiformis (strain ATCC 25196 / NCIMB 11849 / C 71).